The primary structure comprises 577 residues: DEAD-box ATP-dependent RNA helicase 22 (577 aa).

The short motif at 82-110 is the Q motif element; that stretch reads TSWESLGVSDRLASALHGAGLARPSLVQA. In terms of domain architecture, Helicase ATP-binding spans 113-375; that stretch reads IPHVLTTNDV…GGVLKRMFPN (263 aa). Position 126–133 (126–133) interacts with ATP; the sequence is AETGSGKT. The DEAD box signature appears at 249–252; it reads DEAD. A disordered region spans residues 288 to 317; it reads SLGDTNEYREDSDSQSAELSADDEENEDGL. A Helicase C-terminal domain is found at 407-568; it reads LLDAVKYGLK…SFRNKLKKQA (162 aa).

It belongs to the DEAD box helicase family.

The enzyme catalyses ATP + H2O = ADP + phosphate + H(+). The protein is DEAD-box ATP-dependent RNA helicase 22 of Oryza sativa subsp. japonica (Rice).